The sequence spans 502 residues: Protein adenylyltransferase Fic (502 aa).

The tract at residues 1 to 24 (MAMATGKATEEEQPEQGQQQQQLQ) is disordered. Residues 15 to 24 (EQGQQQQQLQ) are compositionally biased toward low complexity. The helical transmembrane segment at 38–60 (FALFFIAGCLAAFGFHALTSSSG) threads the bilayer. TPR repeat units lie at residues 122–155 (AMGA…APKH) and 156–190 (PEVL…NPSN). Positions 247–252 (SVGIEG) match the Inhibitory (S/T)XXXE(G/N) motif motif. ATP is bound by residues Glu251 and 332–335 (VGGH). Positions 301–436 (ITLKDILELH…IRPFVRFIAD (136 aa)) constitute a Fido domain. His379 is a catalytic residue. ATP-binding positions include 383 to 390 (DGNGRTSR), 415 to 416 (YY), and Asn423. Residues 478 to 502 (SPELYESGSGSGAGAGAGSGQKGMP) form a disordered region. The segment covering 486–502 (SGSGAGAGAGSGQKGMP) has biased composition (gly residues).

The protein belongs to the fic family. As to quaternary structure, homodimer.

Its subcellular location is the membrane. The enzyme catalyses L-tyrosyl-[protein] + ATP = O-(5'-adenylyl)-L-tyrosyl-[protein] + diphosphate. It catalyses the reaction L-threonyl-[protein] + ATP = 3-O-(5'-adenylyl)-L-threonyl-[protein] + diphosphate. The catalysed reaction is 3-O-(5'-adenylyl)-L-threonyl-[protein] + H2O = L-threonyl-[protein] + AMP + H(+). The side chain of Glu-251 determines which of the two opposing activities (AMPylase or de-AMPylase) will take place. In response to endoplasmic reticulum stress, mediates de-AMPylase activity. Adenylyltransferase activity is inhibited by the inhibitory helix present at the N-terminus: Glu-251 binds ATP and competes with ATP-binding at Arg-390, thereby preventing adenylyltransferase activity. In unstressed cells, disengagement of Glu-251 promotes adenylyltransferase activity. Activation dissociates ATP-binding from Glu-251, allowing ordered binding of the entire ATP moiety with the alpha-phosphate in an orientation that is productive for accepting an incoming target hydroxyl side chain. Protein that can both mediate the addition of adenosine 5'-monophosphate (AMP) to specific residues of target proteins (AMPylation), and the removal of the same modification from target proteins (de-AMPylation), depending on the context. The side chain of Glu-251 determines which of the two opposing activities (AMPylase or de-AMPylase) will take place. Acts as a key regulator of the unfolded protein response (UPR) by mediating AMPylation or de-AMPylation of Hsc70-3/BiP. In unstressed cells, acts as an adenylyltransferase by mediating AMPylation of Hsc70-3/BiP at 'Thr-518', thereby inactivating it. In response to endoplasmic reticulum stress, acts as a phosphodiesterase by mediating removal of ATP (de-AMPylation) from Hsc70-3/BiP at 'Thr-518', leading to restore HSPA5/BiP activity. The sequence is that of Protein adenylyltransferase Fic from Drosophila mojavensis (Fruit fly).